A 355-amino-acid chain; its full sequence is Methyltransferase FUS9 (355 aa).

S-adenosyl-L-homocysteine contacts are provided by Tyr18, Asn63, Asp86, Ser123, and Phe124. Residue Phe231 participates in Mg(2+) binding.

It belongs to the methyltransferase superfamily. Type-7 methyltransferase family. Requires Mg(2+) as cofactor.

It functions in the pathway mycotoxin biosynthesis. Functionally, methyltransferase; part of the gene cluster that mediates the biosynthesis of the mycotoxin fusarin C. Within the cluster, FUS1, FUS2, FUS8 and FUS9 are sufficient for fusarin production. The roles of the other FUS members are yet undetermined. The fusarin C synthetase FUS1 is responsible for the condensation of one acetyl-coenzyme A (CoA) unit with six malonyl-CoA units and the amide linkage of the arising heptaketide and homoserine, subsequently releasing the first intermediate, prefusarin, as an alcohol with an open ring structure. The cytochrome P450 monooxygenase FUS8 participates in multiple oxidation processes at carbon C-20 and is able to use the FUS1 product as substrate, resulting in formation of 20-hydroxy-prefusarin. This reaction seems to be essential before the 2-pyrrolidone ring closure can be catalyzed by FUS2, generating 20-hydroxy-fusarin. FUS8 is able to further oxidizes carbon C-20 after ring closure, resulting in the formation of carboxy-fusarin C. As the last step, FUS9 methylates the hydroxyl group at C-21 to generate fusarin C. Fusarin C can then rearrange to epi-fusarin C, the (z)-isomers, and fusarin A and fusarin D. The chain is Methyltransferase FUS9 from Gibberella fujikuroi (strain CBS 195.34 / IMI 58289 / NRRL A-6831) (Bakanae and foot rot disease fungus).